The following is a 504-amino-acid chain: Beta-glucosidase 24 (504 aa).

Positions 1–18 (MELLWLLLLLLMASSTSS) are cleaved as a signal peptide. An a beta-D-glucoside-binding site is contributed by Gln-47. The N-linked (GlcNAc...) asparagine glycan is linked to Asn-75. Residues His-151 and 196-197 (NE) contribute to the a beta-D-glucoside site. The active-site Proton donor is Glu-197. Cysteines 216 and 224 form a disulfide. Residue Asn-329 is glycosylated (N-linked (GlcNAc...) asparagine). Residue Tyr-340 coordinates a beta-D-glucoside. The N-linked (GlcNAc...) asparagine glycan is linked to Asn-371. Position 411 (Glu-411) interacts with a beta-D-glucoside. The Nucleophile role is filled by Glu-411. An N-linked (GlcNAc...) asparagine glycan is attached at Asn-421. A beta-D-glucoside is bound by residues Trp-460, 467–468 (EW), and Phe-476.

Belongs to the glycosyl hydrolase 1 family.

The enzyme catalyses Hydrolysis of terminal, non-reducing beta-D-glucosyl residues with release of beta-D-glucose.. In Oryza sativa subsp. japonica (Rice), this protein is Beta-glucosidase 24 (BGLU24).